A 234-amino-acid chain; its full sequence is Riboflavin kinase (234 aa).

The H-T-H motif-like stretch occupies residues 1–98 (MAESTTAVGH…QEIFGDNSSV (98 aa)). The segment at 99–234 (VELTGTVTSG…RITVQLKPKE (136 aa)) is riboflavin kinase. 108–113 (GMGEGR) lines the CDP pocket. Mg(2+) is bound by residues Thr-137 and Asn-139. 2 residues coordinate FMN: Thr-199 and Glu-207. 212–215 (ERLR) contacts CDP.

This sequence belongs to the archaeal riboflavin kinase family. The cofactor is Mg(2+).

The enzyme catalyses riboflavin + CTP = CDP + FMN + H(+). It functions in the pathway cofactor biosynthesis; FMN biosynthesis; FMN from riboflavin (CTP route): step 1/1. Catalyzes the CTP-dependent phosphorylation of riboflavin (vitamin B2) to form flavin mononucleotide (FMN). This chain is Riboflavin kinase (ribK), found in Haloquadratum walsbyi (strain DSM 16790 / HBSQ001).